A 364-amino-acid polypeptide reads, in one-letter code: tRNA-specific 2-thiouridylase MnmA 1 (364 aa).

Residues 11–18 (GMSGGTDS) and phenylalanine 37 each bind ATP. Cysteine 96 (nucleophile) is an active-site residue. A disulfide bridge links cysteine 96 with cysteine 193. ATP is bound at residue glycine 120. An interaction with tRNA region spans residues 142–144 (KDQ). Catalysis depends on cysteine 193, which acts as the Cysteine persulfide intermediate. The segment at 309-310 (RY) is interaction with tRNA.

This sequence belongs to the MnmA/TRMU family.

It is found in the cytoplasm. The enzyme catalyses S-sulfanyl-L-cysteinyl-[protein] + uridine(34) in tRNA + AH2 + ATP = 2-thiouridine(34) in tRNA + L-cysteinyl-[protein] + A + AMP + diphosphate + H(+). In terms of biological role, catalyzes the 2-thiolation of uridine at the wobble position (U34) of tRNA, leading to the formation of s(2)U34. The chain is tRNA-specific 2-thiouridylase MnmA 1 from Bacteroides fragilis (strain YCH46).